The chain runs to 384 residues: Substance-K receptor (384 aa).

The Extracellular portion of the chain corresponds to 1 to 32 (MGGRAIVTDTNIFSGLESNTTGVTAFSMPAWQ). An N-linked (GlcNAc...) asparagine glycan is attached at asparagine 19. Residues 33–56 (LALWATAYLGLVLVAVTGNATVIW) traverse the membrane as a helical segment. At 57–69 (IILAHERMRTVTN) the chain is on the cytoplasmic side. Residues 70–90 (YFIINLALADLCMAAFNATFN) form a helical membrane-spanning segment. Over 91 to 107 (FVYASHNIWYFGRAFCY) the chain is Extracellular. A disulfide bridge connects residues cysteine 106 and cysteine 181. The chain crosses the membrane as a helical span at residues 108 to 129 (FQNLFPITAMFVSIYSMTAIAA). Residues 130 to 149 (DRYMAIVHPFQPRLSAPITK) lie on the Cytoplasmic side of the membrane. A helical transmembrane segment spans residues 150–170 (ATIAGIWLVALALASPQCFYS). The Extracellular segment spans residues 171-196 (TITVDQGATKCVVAWPNDNGGKMLLL). A helical membrane pass occupies residues 197–218 (YHLVVFVLVYFLPLVVMFVAYS). Residues 219–251 (VIGLTLWKRAVPRHQAHGANLRHLHAKKKFVKA) are Cytoplasmic-facing. Residues 252–272 (MVLVVLTFAICWLPYHLYFIL) form a helical membrane-spanning segment. Residues 273-290 (GSFQKDIYYRKFIQQVYL) lie on the Extracellular side of the membrane. Residues 291-310 (ALFWLAMSSTMYNPIIYCCL) form a helical membrane-spanning segment. Residues 311 to 384 (NHRFRSGFRL…SPQDVEPAAP (74 aa)) are Cytoplasmic-facing. A lipid anchor (S-palmitoyl cysteine) is attached at cysteine 324.

The protein belongs to the G-protein coupled receptor 1 family.

The protein localises to the cell membrane. This is a receptor for the tachykinin neuropeptide substance K (neurokinin A). It is associated with G proteins that activate a phosphatidylinositol-calcium second messenger system. The rank order of affinity of this receptor to tachykinins is: substance K &gt; neuromedin-K &gt; substance P. The polypeptide is Substance-K receptor (TACR2) (Mesocricetus auratus (Golden hamster)).